Here is a 429-residue protein sequence, read N- to C-terminus: MLNKDLVDHDLSDEVCELLPASRHKTYVVKVGQVKIGGNNPIVVQSMALGVHIDSDNVKSSAKRYAKEIIELAHAGSELVRIALNSEEVARAVPYIVEEINKEGFDGKILVGCGQYELDKLVRNYPDNIKMLGKIRINPGNIGFGDKHDEKFERVIEYAITHDIPVRIGVNWGSLDKYLLQKLMDENSLSNNPKSSDVILRKALVMSALNSAQKAEEIGLSLDKIVISCKVSRVQDLISVYTALAKSSNYALHLGLTEAGTGNKGMISTTAGLTYLLQNGIGDTIRASLTQRPGEPRVNEVAVCQEILQSIGLRHFNPQVNSCPGCGRTNSDRFRILTEEVNDYIKIRMPTWKKKNPGVEHMNIAVMGCIVNGPGESKHANLGISLPGYGEKPISAVYKDGKYFKTLQGDNIFEEFKAIIDDYVKEHYT.

Cys323, Cys326, Cys369, and Glu376 together coordinate [4Fe-4S] cluster.

This sequence belongs to the IspG family. [4Fe-4S] cluster is required as a cofactor.

The enzyme catalyses (2E)-4-hydroxy-3-methylbut-2-enyl diphosphate + oxidized [flavodoxin] + H2O + 2 H(+) = 2-C-methyl-D-erythritol 2,4-cyclic diphosphate + reduced [flavodoxin]. It functions in the pathway isoprenoid biosynthesis; isopentenyl diphosphate biosynthesis via DXP pathway; isopentenyl diphosphate from 1-deoxy-D-xylulose 5-phosphate: step 5/6. Functionally, converts 2C-methyl-D-erythritol 2,4-cyclodiphosphate (ME-2,4cPP) into 1-hydroxy-2-methyl-2-(E)-butenyl 4-diphosphate. In Wolbachia sp. subsp. Brugia malayi (strain TRS), this protein is 4-hydroxy-3-methylbut-2-en-1-yl diphosphate synthase (flavodoxin).